A 168-amino-acid polypeptide reads, in one-letter code: NADH-quinone oxidoreductase subunit B (168 aa).

4 residues coordinate [4Fe-4S] cluster: C37, C38, C103, and C132.

This sequence belongs to the complex I 20 kDa subunit family. As to quaternary structure, NDH-1 is composed of 14 different subunits. Subunits NuoB, C, D, E, F, and G constitute the peripheral sector of the complex. The cofactor is [4Fe-4S] cluster.

Its subcellular location is the cell inner membrane. It catalyses the reaction a quinone + NADH + 5 H(+)(in) = a quinol + NAD(+) + 4 H(+)(out). In terms of biological role, NDH-1 shuttles electrons from NADH, via FMN and iron-sulfur (Fe-S) centers, to quinones in the respiratory chain. The immediate electron acceptor for the enzyme in this species is believed to be ubiquinone. Couples the redox reaction to proton translocation (for every two electrons transferred, four hydrogen ions are translocated across the cytoplasmic membrane), and thus conserves the redox energy in a proton gradient. In Campylobacter fetus subsp. fetus (strain 82-40), this protein is NADH-quinone oxidoreductase subunit B.